Consider the following 38-residue polypeptide: Large ribosomal subunit protein bL36 (38 aa).

Belongs to the bacterial ribosomal protein bL36 family.

The polypeptide is Large ribosomal subunit protein bL36 (Methylacidiphilum infernorum (isolate V4) (Methylokorus infernorum (strain V4))).